We begin with the raw amino-acid sequence, 23 residues long: MITVPHVVNLNLTGQWRENGGQI.

The sequence is that of Unknown protein NF016 from 2D-PAGE from Naegleria fowleri (Brain eating amoeba).